The primary structure comprises 1474 residues: MKSLLNAFTKKEVPFREAPAYSNRRRRPPNTLAAPRVLLRSNSDNNLNAGAPEWAVCSAATSHRSLSPQLLQQTPSKPDGATKSLGSYAPGPRSRSPSLNRLGGAGEDGKRPQPPHWHVGSPFTPGANKDSLSTFEYPGPRRKLYSAVPGRLFVAIKPYQPQVDGEIPLHRGDRVKVLSIGEGGFWEGSARGHIGWFPAECVEEVQCKPRDSQAETRADRSKKLFRHYTVGSYDSFDAASDCIIEDKTVVLQKKDNEGFGFVLRGAKADTPIEEFTPTPAFPALQYLESVDEGGVAWQAGLRTGDFLIEVNNENVVKVGHRQVVNMIRQGGNHLVLKVVTVTRNLDPDDTARKKAPPPPKRAPTTALTLRSKSMTAELEELGLSLVDKASVRKKKDKPEEIVPASKPSRTAENVAIESRVATIKQRPTSRCFPAASDVNSVYERQGIAVMTPTVPGSPKGPFLGLPRGTMRRQKSIDSRIFLSGITEEERQFLAPPMLKFTRSLSMPDTSEDIPPPPQSVPPSPPPPSPTTYNCPRSPTPRVYGTIKPAFNQNPVAKVPPATRSDTVATMMREKGMFYRRELDRFSLDSEDVYSRSPAPQAAFRTKRGQMPENPYSEVGKIASKAVYVPAKPARRKGMLVKQSNVEDSPEKTCSIPIPTIIVKEPSTSSSGKSSQGSSMEIDPQATEPGQLRPDDSLTVSSPFAAAIAGAVRDREKRLEARRNSPAFLSTDLGDEDVGLGPPAPRMQPSKFPEEGGFGDEDETEQPLLPTPGAAPRELENHFLGGGEAGAQGEAGGPLSSTSKAKGPESGPAAALKSSSPASPENYVHPLTGRLLDPSSPLALALSARDRAMQESQQGHKGEAPKADLNKPLYIDTKMRPSVESGFPPVTRQNTRGPLRRQETENKYETDLSKDRRADDKKNMLINIVDTAQQKSAGLLMVHTVDIPVAGPPLEEEEDREDGDTKPDHSPSTVPEGVPKTEGALQISAAPEPAAAPGRTIVAAGSVEEAVILPFRIPPPPLASVDLDEDFLFTEPLPPPLEFANSFDIPDDRAASVPALADLVKQKKSDTPQPPSLNSSQPANSTDSKKPAGISNCLPSSFLPPPESFDAVTDSGIEEVDSRSSSDHHLETTSTISTVSSISTLSSEGGESMDTCTVYADGQAFVVDKPPVPPKPKMKPIVHKSNALYQDTLPEEDTDGFVIPPPAPPPPPGSAQAGVAKVIQPRTSKLWGDVTEVKSPILSGPKANVISELNSILQQMNRGKSVKPGEGLELPVGAKSANLAPRSPEVMSTVSGTRSTTVTFTVRPGTSQPITLQSRPPDYESRTSGPRRAPSPVVSPTELSKEILPTPPSAAAASPSPTLSDVFSLPSQSPAGDLFGLNPAGRSRSPSPSILQQPISNKPFTTKPVHLWTKPDVADWLESLNLGEHKETFMDNEIDGSHLPNLQKEDLIDLGVTRVGHRMNIERALKQLLDR.

Polar residues predominate over residues 66–76; the sequence is LSPQLLQQTPS. The disordered stretch occupies residues 66 to 125; that stretch reads LSPQLLQQTPSKPDGATKSLGSYAPGPRSRSPSLNRLGGAGEDGKRPQPPHWHVGSPFTP. Residues 148–207 enclose the SH3 domain; that stretch reads VPGRLFVAIKPYQPQVDGEIPLHRGDRVKVLSIGEGGFWEGSARGHIGWFPAECVEEVQC. Gln-162 is modified (phosphoserine). A PDZ domain is found at 248–342; that stretch reads TVVLQKKDNE…HLVLKVVTVT (95 aa). Ser-373 carries the post-translational modification Phosphoserine. A disordered region spans residues 392–413; that stretch reads RKKKDKPEEIVPASKPSRTAEN. Ser-457 is modified (phosphoserine). Thr-486 is subject to Phosphothreonine. Residues 504 to 534 form a disordered region; that stretch reads LSMPDTSEDIPPPPQSVPPSPPPPSPTTYNC. The span at 513 to 529 shows a compositional bias: pro residues; that stretch reads IPPPPQSVPPSPPPPSP. A Phosphoserine modification is found at Ser-586. Disordered regions lie at residues 659–920, 947–995, and 1057–1153; these read TIIV…ADDK, PVAG…PAAA, and PALA…ESMD. Low complexity predominate over residues 666 to 678; that stretch reads STSSSGKSSQGSS. Residues 711–722 show a composition bias toward basic and acidic residues; that stretch reads VRDREKRLEARR. Position 724 is a phosphoserine (Ser-724). The segment covering 783-795 has biased composition (gly residues); that stretch reads LGGGEAGAQGEAG. Low complexity-rich tracts occupy residues 811–823 and 833–846; these read PAAA…PASP and RLLD…LALS. Basic and acidic residues-rich tracts occupy residues 847 to 868 and 899 to 920; these read ARDR…KADL and RRQE…ADDK. A Phosphothreonine modification is found at Thr-903. Residues 1075 to 1085 show a composition bias toward polar residues; that stretch reads SLNSSQPANST. Over residues 1119-1130 the composition is skewed to basic and acidic residues; that stretch reads VDSRSSSDHHLE. Over residues 1131–1151 the composition is skewed to low complexity; that stretch reads TTSTISTVSSISTLSSEGGES. The short motif at 1169–1175 is the SH3-binding element; it reads PPVPPKP. 2 disordered regions span residues 1195-1216 and 1260-1401; these read EDTD…SAQA and NRGK…ISNK. The segment covering 1202–1212 has biased composition (pro residues); it reads IPPPAPPPPPG. The segment covering 1291 to 1305 has biased composition (low complexity); it reads STVSGTRSTTVTFTV. Thr-1292 carries O-linked (GlcNAc) threonine glycosylation. Residues 1307-1317 show a composition bias toward polar residues; that stretch reads PGTSQPITLQS. Residues Ser-1334 and Ser-1338 each carry the phosphoserine modification. 2 stretches are compositionally biased toward low complexity: residues 1352–1363 and 1385–1399; these read SAAAASPSPTLS and RSRS…QPIS. Residues 1411–1474 enclose the SAM domain; sequence WTKPDVADWL…ERALKQLLDR (64 aa).

The protein belongs to the SHANK family. As to quaternary structure, is part of a complex with DLG4/PSD-95 and DLGAP1/GKAP. Interacts with CTTN/cortactin SH3 domain, DLGAP1/GKAP and alpha-latrotoxin receptor 1. Interacts with DNM2, DBNL, GRID2, BAIAP2, SLC9A3, PLCB3 and CFTR. Interacts with ABI1 (via SH3 domain). Interacts (via proline-rich region) with PDE4D isoform 5 (via N-terminal region). Interacts with PDE4D isoform 33, isoform 4, isoform 7, isoform 8 and isoform 9 but not isoform 32 and isoform 6. Interacts weakly with PDE4D isoform 31. Interacts with ABI1. As to expression, expressed in epithelial cells (at protein level). All isoforms except isoform 7 are expressed predominantly in brain, with highest levels in olfactory bulb, cerebral cortex, cerebellum, central gray matter and hippocampus. Moderate levels of expression are seen in the caudate putamen, thalamic nuclei and brain stem. In cerebellum primarily expressed in Purkinje cells. Isoform 7 is not expressed in brain but expressed in liver, cholangiocytes and thymus. Isoform 7 is present in pancreas, colonic mucosa and thymocytes (at protein level).

It is found in the apical cell membrane. The protein resides in the cytoplasm. The protein localises to the synapse. It localises to the postsynaptic density. Its subcellular location is the cell projection. It is found in the growth cone. The protein resides in the dendritic spine. In terms of biological role, seems to be an adapter protein in the postsynaptic density (PSD) of excitatory synapses that interconnects receptors of the postsynaptic membrane including NMDA-type and metabotropic glutamate receptors, and the actin-based cytoskeleton. May play a role in the structural and functional organization of the dendritic spine and synaptic junction. This chain is SH3 and multiple ankyrin repeat domains protein 2 (Shank2), found in Rattus norvegicus (Rat).